The chain runs to 364 residues: DNA replication and repair protein RecF (364 aa).

Position 30-37 (30-37) interacts with ATP; that stretch reads GNNGQGKT.

It belongs to the RecF family.

Its subcellular location is the cytoplasm. In terms of biological role, the RecF protein is involved in DNA metabolism; it is required for DNA replication and normal SOS inducibility. RecF binds preferentially to single-stranded, linear DNA. It also seems to bind ATP. The chain is DNA replication and repair protein RecF from Geotalea daltonii (strain DSM 22248 / JCM 15807 / FRC-32) (Geobacter daltonii).